The chain runs to 535 residues: T-complex protein 1 subunit beta (535 aa).

A2 carries the N-acetylalanine modification. S3 carries the post-translational modification Phosphoserine. K13 carries the post-translational modification N6-acetyllysine. G44 serves as a coordination point for ADP. ATP is bound at residue G44. S60 is subject to Phosphoserine. D97 lines the Mg(2+) pocket. Residues G98, T99, T100, and S101 each coordinate ADP. G98, T99, and T100 together coordinate ATP. At K154 the chain carries N6-acetyllysine. 2 residues coordinate ADP: S168 and S169. K181 is modified (N6-acetyllysine). A Glycyl lysine isopeptide (Lys-Gly) (interchain with G-Cter in SUMO2) cross-link involves residue K248. The residue at position 260 (S260) is a Phosphoserine. A Phosphothreonine modification is found at T261. ADP-binding residues include G410, E495, and K500. Residues E495 and K500 each coordinate ATP.

Belongs to the TCP-1 chaperonin family. Component of the chaperonin-containing T-complex (TRiC), a hexadecamer composed of two identical back-to-back stacked rings enclosing a protein folding chamber. Each ring is made up of eight different subunits: TCP1/CCT1, CCT2, CCT3, CCT4, CCT5, CCT6A/CCT6, CCT7, CCT8. Interacts with PACRG. Interacts with FLCN. Interacts with DLEC1. Interacts with SVEP1.

It is found in the cytoplasm. The enzyme catalyses ATP + H2O = ADP + phosphate + H(+). In terms of biological role, component of the chaperonin-containing T-complex (TRiC), a molecular chaperone complex that assists the folding of actin, tubulin and other proteins upon ATP hydrolysis. The TRiC complex mediates the folding of WRAP53/TCAB1, thereby regulating telomere maintenance. As part of the TRiC complex may play a role in the assembly of BBSome, a complex involved in ciliogenesis regulating transports vesicles to the cilia. The sequence is that of T-complex protein 1 subunit beta (CCT2) from Bos taurus (Bovine).